A 375-amino-acid chain; its full sequence is Tyrosine--tRNA ligase (375 aa).

Tyrosine 37, tyrosine 168, glutamine 172, aspartate 175, and glutamine 190 together coordinate L-tyrosine. Residues 251–255 carry the 'KMSKS' region motif; it reads KMSKS. Lysine 254 contributes to the ATP binding site.

It belongs to the class-I aminoacyl-tRNA synthetase family. TyrS type 4 subfamily. Homodimer.

The protein localises to the cytoplasm. It carries out the reaction tRNA(Tyr) + L-tyrosine + ATP = L-tyrosyl-tRNA(Tyr) + AMP + diphosphate + H(+). In terms of biological role, catalyzes the attachment of tyrosine to tRNA(Tyr) in a two-step reaction: tyrosine is first activated by ATP to form Tyr-AMP and then transferred to the acceptor end of tRNA(Tyr). This is Tyrosine--tRNA ligase from Thermococcus onnurineus (strain NA1).